Consider the following 582-residue polypeptide: ABC transporter-like protein ECU11_1340 (582 aa).

An ABC transporter domain is found at 15-257 (VPNQNLSSNE…LGTKGIHNDG (243 aa)). Residue 47–54 (GTSGSGKT) participates in ATP binding. An ABC transmembrane type-2 domain is found at 316–519 (YVSFQMAIRQ…EIDAFISNFF (204 aa)). The next 6 helical transmembrane spans lie at 335–355 (ILYS…GKYI), 359–378 (FSIA…YVMN), 412–432 (TLVS…FGLI), 436–456 (HAFL…SMLF), 482–502 (GALL…SVIP), and 551–571 (SFLR…SSIL).

This sequence belongs to the ABC transporter superfamily.

The protein resides in the membrane. The polypeptide is ABC transporter-like protein ECU11_1340 (Encephalitozoon cuniculi (strain GB-M1) (Microsporidian parasite)).